We begin with the raw amino-acid sequence, 184 residues long: Ribosome-recycling factor (184 aa).

The protein belongs to the RRF family.

The protein localises to the cytoplasm. Its function is as follows. Responsible for the release of ribosomes from messenger RNA at the termination of protein biosynthesis. May increase the efficiency of translation by recycling ribosomes from one round of translation to another. The sequence is that of Ribosome-recycling factor from Clostridium botulinum (strain Loch Maree / Type A3).